The primary structure comprises 32 residues: Mu-theraphotoxin-Se1a (32 aa).

3 cysteine pairs are disulfide-bonded: Cys2/Cys17, Cys9/Cys22, and Cys16/Cys28.

Belongs to the neurotoxin 10 (Hwtx-1) family. As to expression, expressed by the venom gland.

It localises to the secreted. Voltage-gated sodium channel Nav1.7/SCN9A inhibitor. The protein is Mu-theraphotoxin-Se1a of Selenocosmia effera (Tarantula spider).